Here is a 492-residue protein sequence, read N- to C-terminus: Fascin-2 (492 aa).

The protein belongs to the fascin family. In terms of tissue distribution, exclusively expressed in the eye, specifically in photoreceptor cells.

The protein localises to the cytoplasm. It localises to the cytoskeleton. It is found in the cell projection. The protein resides in the stereocilium. Functionally, acts as an actin bundling protein. May play a pivotal role in photoreceptor cell-specific events, such as disk morphogenesis. This chain is Fascin-2 (FSCN2), found in Bos taurus (Bovine).